The chain runs to 200 residues: Proteasome subunit beta 2 (200 aa).

Position 1 (M1) is a propeptide, removed in mature form; by autocatalysis. T2 (nucleophile) is an active-site residue.

The protein belongs to the peptidase T1B family. As to quaternary structure, the 20S proteasome core is composed of 14 alpha and 14 beta subunits that assemble into four stacked heptameric rings, resulting in a barrel-shaped structure. The two inner rings, each composed of seven catalytic beta subunits, are sandwiched by two outer rings, each composed of seven alpha subunits. The catalytic chamber with the active sites is on the inside of the barrel. Has a gated structure, the ends of the cylinder being occluded by the N-termini of the alpha-subunits. Is capped at one or both ends by the proteasome regulatory ATPase, PAN.

It is found in the cytoplasm. The enzyme catalyses Cleavage of peptide bonds with very broad specificity.. Its activity is regulated as follows. The formation of the proteasomal ATPase PAN-20S proteasome complex, via the docking of the C-termini of PAN into the intersubunit pockets in the alpha-rings, triggers opening of the gate for substrate entry. Interconversion between the open-gate and close-gate conformations leads to a dynamic regulation of the 20S proteasome proteolysis activity. Functionally, component of the proteasome core, a large protease complex with broad specificity involved in protein degradation. This chain is Proteasome subunit beta 2, found in Pyrobaculum islandicum (strain DSM 4184 / JCM 9189 / GEO3).